The primary structure comprises 574 residues: MRWSRCYIPTLKEAPSDAEVVSHKLLVRAGMIRKLTSGIYTFMPMGLRALNKVAAIVREEMNRAGAQEVLMPMVQPADLWQETGRWEFYGKELLRFRDRNDRDYCLGPTHEEVITDLVRGEVRSYRQLPINLYQIQTKFRDEIRPRFGLMRGREFVMKDAYSFDRDQSGCDESYKAMYAAYQRIFSRLGLRFRAVEADSGSIGGSFSHEFMVLADTGEDTLAVCTACEYAANVERAEVTGTPCTRPAAAALAEVPTPGAHTIEEVSAFLGVPADMLVKTLLFVADGEPVAALVRGDRELNEVKLKNLLGADSLELATPEQVEAWTGAPVGFAGPVGLHGVKRVFADTELKGDAGWIVGANKADTHLREVSLTRDAAIEAYADLRMITASDPCPRCGGAVELPKGIEVGHVFKLGLKYSKSMNATFLDENGKEQVMVMGCYGIGVSRVVASCIEQNNDGDGIVFPPPIAPYEVALLLLDPKNEEAAAKAAEIESFLEAEGHDVLLDDRDERPGVKFKDADLIGSPYQLVLGGKGLARGVVEAKNRRSGEKTELPVEGFAEAFRDWRAGVLKGWGL.

This sequence belongs to the class-II aminoacyl-tRNA synthetase family. ProS type 1 subfamily. As to quaternary structure, homodimer.

Its subcellular location is the cytoplasm. The catalysed reaction is tRNA(Pro) + L-proline + ATP = L-prolyl-tRNA(Pro) + AMP + diphosphate. Its function is as follows. Catalyzes the attachment of proline to tRNA(Pro) in a two-step reaction: proline is first activated by ATP to form Pro-AMP and then transferred to the acceptor end of tRNA(Pro). As ProRS can inadvertently accommodate and process non-cognate amino acids such as alanine and cysteine, to avoid such errors it has two additional distinct editing activities against alanine. One activity is designated as 'pretransfer' editing and involves the tRNA(Pro)-independent hydrolysis of activated Ala-AMP. The other activity is designated 'posttransfer' editing and involves deacylation of mischarged Ala-tRNA(Pro). The misacylated Cys-tRNA(Pro) is not edited by ProRS. The sequence is that of Proline--tRNA ligase from Nitratidesulfovibrio vulgaris (strain ATCC 29579 / DSM 644 / CCUG 34227 / NCIMB 8303 / VKM B-1760 / Hildenborough) (Desulfovibrio vulgaris).